The chain runs to 266 residues: Large ribosomal subunit protein eL8 (266 aa).

Glycyl lysine isopeptide (Lys-Gly) (interchain with G-Cter in SUMO2) cross-links involve residues lysine 11, lysine 20, and lysine 21. The residue at position 34 (lysine 34) is an N6-acetyllysine. A Glycyl lysine isopeptide (Lys-Gly) (interchain with G-Cter in SUMO2) cross-link involves residue lysine 48. At lysine 97 the chain carries N6-acetyllysine; alternate. Residue lysine 97 forms a Glycyl lysine isopeptide (Lys-Gly) (interchain with G-Cter in SUMO2); alternate linkage. Lysine 125 participates in a covalent cross-link: Glycyl lysine isopeptide (Lys-Gly) (interchain with G-Cter in SUMO2). Lysine 217 carries the post-translational modification N6-acetyllysine. A Glycyl lysine isopeptide (Lys-Gly) (interchain with G-Cter in SUMO2) cross-link involves residue lysine 245.

This sequence belongs to the eukaryotic ribosomal protein eL8 family. In terms of assembly, component of the large ribosomal subunit. Interacts with CRY1. Interacts with DICER1, AGO2, TARBP2, MOV10 and EIF6; they form a large RNA-induced silencing complex (RISC).

It localises to the cytoplasm. Functionally, component of the large ribosomal subunit. The ribosome is a large ribonucleoprotein complex responsible for the synthesis of proteins in the cell. The polypeptide is Large ribosomal subunit protein eL8 (Rpl7a) (Rattus norvegicus (Rat)).